Here is a 267-residue protein sequence, read N- to C-terminus: Probable ribosomal RNA small subunit methyltransferase A (267 aa).

The S-adenosyl-L-methionine site is built by Leu12, Gly37, Glu58, Asp83, and Asn100.

It belongs to the class I-like SAM-binding methyltransferase superfamily. rRNA adenine N(6)-methyltransferase family. RsmA subfamily.

The protein resides in the cytoplasm. Its function is as follows. Specifically dimethylates two adjacent adenosines in the loop of a conserved hairpin near the 3'-end of 16S rRNA in the 30S particle. May play a critical role in biogenesis of 30S subunits. The polypeptide is Probable ribosomal RNA small subunit methyltransferase A (Methanococcus vannielii (strain ATCC 35089 / DSM 1224 / JCM 13029 / OCM 148 / SB)).